A 323-amino-acid chain; its full sequence is tRNA N6-adenosine threonylcarbamoyltransferase (323 aa).

Residues histidine 110 and histidine 114 each coordinate Fe cation. Residues valine 131–glycine 135, aspartate 164, glycine 177, and asparagine 264 each bind substrate. Residue aspartate 288 coordinates Fe cation.

It belongs to the KAE1 / TsaD family. The cofactor is Fe(2+).

It localises to the cytoplasm. It carries out the reaction L-threonylcarbamoyladenylate + adenosine(37) in tRNA = N(6)-L-threonylcarbamoyladenosine(37) in tRNA + AMP + H(+). In terms of biological role, required for the formation of a threonylcarbamoyl group on adenosine at position 37 (t(6)A37) in tRNAs that read codons beginning with adenine. Is involved in the transfer of the threonylcarbamoyl moiety of threonylcarbamoyl-AMP (TC-AMP) to the N6 group of A37, together with TsaE and TsaB. TsaD likely plays a direct catalytic role in this reaction. This is tRNA N6-adenosine threonylcarbamoyltransferase from Thermus thermophilus (strain ATCC BAA-163 / DSM 7039 / HB27).